The chain runs to 379 residues: Alcohol dehydrogenase 1 (379 aa).

The Zn(2+) site is built by Cys47, Thr49, His69, Cys99, Cys102, Cys105, Cys113, and Cys177. Residues Thr49 and His69 each coordinate an alcohol. Thr49 is an NAD(+) binding site. Residues 202 to 207 (GLGAVG), Asp226, Arg231, Thr272, Val295, 295 to 297 (VGV), Phe322, and Arg372 contribute to the NAD(+) site.

The protein belongs to the zinc-containing alcohol dehydrogenase family. Homodimer. Zn(2+) is required as a cofactor.

It localises to the cytoplasm. It catalyses the reaction a primary alcohol + NAD(+) = an aldehyde + NADH + H(+). The enzyme catalyses a secondary alcohol + NAD(+) = a ketone + NADH + H(+). The protein is Alcohol dehydrogenase 1 (ADH1) of Zea mays (Maize).